A 511-amino-acid polypeptide reads, in one-letter code: MEEYQIYLEIDGSCQENFLYPLSFQEYIYGLAYGHDLNRKVSILVENVDSDKKYSLLIVKRLITRMYQQNHLLLFANDSKKNLFLGYNKNFYSQIISDAFAVIVEIPFSRQFISSLEDAETIKSFNNLRSIHSIFSFFEDKFTYLNFVSDVRIPYPIHLEILVQTXXXXXXXXPFFHLLRLFLYEYSNWNTFITQKKRISTLSKSNPRFYIFLYNFYVCEHESIFLFLRKNSSHLRLNSFSLLFERIHFYAKLEHLVEVFAKDFSCTLAFFKDPMIHYVRYQGKSILASKNAPLLLNKWKYYLIYLWQCHFDVWSQEGTIRIKQLLSEHSFHFFWGGYISNVRLNFSVVRSQMLENSFPIEIGMKRLDTIVPIIPLIRSLAKAKFCNILGHPISKPVWTDSSDFDIIDRFLRICRNISHYYKGSSKKKGLYRIKYILRLSCIKTLARKHKSTVRAFLKRLDSEELLEEFLTEEEEILSLIFPRASSTLQSLYRDQIWYLDILFSHDLFNYE.

This sequence belongs to the intron maturase 2 family. MatK subfamily.

It localises to the plastid. It is found in the chloroplast. Its function is as follows. Usually encoded in the trnK tRNA gene intron. Probably assists in splicing its own and other chloroplast group II introns. The chain is Maturase K from Adesmia lanata.